The sequence spans 347 residues: NADH-ubiquinone oxidoreductase chain 2 (347 aa).

The next 10 membrane-spanning stretches (helical) occupy residues 1–21, 25–45, 59–79, 96–116, 122–142, 148–168, 200–220, 240–260, 274–294, and 325–345; these read MNPLIFSIITFTMMLGTGIVM, HWLTMWIGFEMNMLAIIPILM, YFLTQATASMLLMLAVTINLV, IILTLAMAMKLGLSPFHFWVP, VHLPSGLILLTWQKLAPMSVL, MINLDLMFTMSILSIAIGGWG, MALLNLTIYIILTTTTFLTFM, ITTIILVTMLSLGGLPPLSGF, NSIIAPTTMAITALLNLFFYM, and LLSPLTILSTMILPLSPMLML.

This sequence belongs to the complex I subunit 2 family. As to quaternary structure, core subunit of respiratory chain NADH dehydrogenase (Complex I) which is composed of 45 different subunits. Interacts with TMEM242.

The protein localises to the mitochondrion inner membrane. The catalysed reaction is a ubiquinone + NADH + 5 H(+)(in) = a ubiquinol + NAD(+) + 4 H(+)(out). Core subunit of the mitochondrial membrane respiratory chain NADH dehydrogenase (Complex I) which catalyzes electron transfer from NADH through the respiratory chain, using ubiquinone as an electron acceptor. Essential for the catalytic activity and assembly of complex I. This is NADH-ubiquinone oxidoreductase chain 2 from Thoopterus nigrescens (Swift fruit bat).